An 80-amino-acid polypeptide reads, in one-letter code: Exodeoxyribonuclease 7 small subunit (80 aa).

Belongs to the XseB family. As to quaternary structure, heterooligomer composed of large and small subunits.

The protein resides in the cytoplasm. It catalyses the reaction Exonucleolytic cleavage in either 5'- to 3'- or 3'- to 5'-direction to yield nucleoside 5'-phosphates.. In terms of biological role, bidirectionally degrades single-stranded DNA into large acid-insoluble oligonucleotides, which are then degraded further into small acid-soluble oligonucleotides. This Pseudomonas aeruginosa (strain LESB58) protein is Exodeoxyribonuclease 7 small subunit.